A 1828-amino-acid polypeptide reads, in one-letter code: Protein TIC 214 (1828 aa).

6 helical membrane passes run 18-38 (IINSVVVVGLYYGFLTTFSIG), 64-84 (FITGQLMIFISIYYAPLHLAM), 87-107 (PYTITVLGLPYLLFHFFWKNH), 124-144 (FSIQSIFLNNFIFQLLNHFVL), 172-192 (VGWLIGHILFMKWVGLILFWI), and 222-242 (VNIFLFITCVYYLGRIPSPIL). Residues 270 to 279 (SEAKETKQEQ) show a composition bias toward basic and acidic residues. Disordered stretches follow at residues 270–301 (SEAKETKQEQKGSFAEEDSSLGSEEREDPNKL), 618–637 (DLQQQERENEEESTEDHAIR), 741–763 (EFKTSNSDEKETKEKEKKREDKK), and 1533–1571 (KEEFGQGNLGSDTQNQQKDVEKDYAKSDIKKRGKKRQSK). Over residues 1550 to 1562 (KDVEKDYAKSDIK) the composition is skewed to basic and acidic residues.

This sequence belongs to the TIC214 family. In terms of assembly, part of the Tic complex.

The protein resides in the plastid. It is found in the chloroplast inner membrane. In terms of biological role, involved in protein precursor import into chloroplasts. May be part of an intermediate translocation complex acting as a protein-conducting channel at the inner envelope. The chain is Protein TIC 214 from Calycanthus floridus var. glaucus (Eastern sweetshrub).